The following is a 2245-amino-acid chain: MTTSTIENGASSPIIVSSSTPKLYQEGAGVWIPDQELGWIGADVIEHSETSADQVLVRTEDDREVKIPLSKVFQKNPDILEGVDDLSFLSHLHEPAILHNLHHRYNLNQIYTYIGKILIAINPYTSLPLYGKEMISAYYGKQLGTLAPHVYAVAEDAFKDMRYDGTSQSILVSGESGAGKTETTKFLLQYFAAMGNMIKESTSSSSINGINTSSDGIPVTPPPSPMKKSPVDKSVEERVLESTPLLEAFGNAKTLRNDNSSRFGKFIEIHFNEMGSIIGAKILTYLLEKSRIVRQVYNERNYHIFYQLLSGASEELKEKLNLKTIEEYSYLNKSGCFEIEGVSDEEHFNKTCHAMQVAGITLVEQENVFRILSAILLIGNFEFENIAGSNDDSCQLIDRDPLEKVSVLLGCAQPDELLNSMLTRKVVTGKESYISHNTKERAENARDSLSMFLYGMMFDWLVVKINSSMSISTQQKSKSFIGVLDIYGFESFEVNGFEQFCINYANEKLQQLFNQHVFKEEQQEYIKEKIDWSYIDFNDNQDTLDLIEKKPICILTLLDEETMFPKATPQTLATKLYSKMTSHSKFEKPRFSSTAFTINHYAGKVTYETDQFLDKNKDFIIPEQISILQRSNFSFIKVLMSHSDKFTQSPGGHPQGNGGPTSSNTKGTSGSSSMKFLSVGSQFSTSLATLMKTISTTTPHYVRCIKPNPEKLPQTFNKQDVIHQLRCGGVMESVRICCAGFPTRRLLSEFYQRYKILYVKDINTGSGGGKKGSNNNKIKDPKILVQNLLTGIELSDDKYKIGLTKVFLRAGQLASLEDMRLEQLDRSATVIQKRWKGYLYRKRYKQLRDASLIIQTKLRSVHAKQQLSALQRTHSAILIQKVWRAHRDRVQYQKIRDASLQLQTVMRRHLFSEQVHRERCENAAIILQTKIRQILSKREVDKKLRGIILIQARWRMKLAKRVYIQLRAEARSLRTVQEQKNKLQEKLEELQWRLTSEAKRKQQLEDQKVKSDTTISELSSNNDHLELQLSEIQLKYQELDKSNQSSQLQLSECLSKLEEQTQQLDHSSKLNKKLEKDLSDQHDSIEKLQSQFNETEQQLQQFKQQSEELSSKLSKTTQQLDFNKQEFDRLSQERDTDNTNNQLEIQQLKKANSTLEEDYFSLSGIRDNLERQVLELRDENQLIKERLDSLGQQSSQFQSGAALEKQQLEQLVQEQSEQLIKLSSEKLGSEEEAKKQINQLELELTDHKSKLQIQLQLTEQSNEKIKKLKGKLEEYQDEKKQLQQELERIKQSKQSVEDEKNSLITQLTTVKFESTQVSTNVSHQKEKITTLKSTIEELNKSIGKLQAEQKNKDDEIRKIQFELNDQKQQFTRQTKEFSDLQSQQSIDRQKSEITIHSLERTNETLKSDFERVQQSLKQQERDCQQYKDTINRLENEVKQLTQLKERFENEFFVAKEQNSNQTQESVYLKEVTTQMQQNQSRIERELEEKKQHITRIDDERDELKKQLTQLQQQHEQSSTQLLLAQNELERLRKKELKYKERGHETSKQQDQFNMEIQSLRITNNDQLKSLQDYEQEKKKLKDKLSSSKQEAQQQRESIIKMDAELSAIKQHSQWVENSFTDMKQRNQELIESSALYKQQLLQQTSTIDSTIKEKENEISKLQQQLETSNQQLHQLKEELNSMKQSNQLESTEQSKQLNQLIQENQQLKSVTNEISKQLDDAVFENQKINNTIKEQEIKSKRMSVELQQHIDEGKQQEIQQLQSTIAQLKQQQQSETDRLEKEIQQMKRERETQMKLVESTKLNYHMLEDRMELYRNVMEIIDYKETEWEKLARLAGCKELDTKLLSDFLLSCKLEHTSLGSQMWFHQIDYWCPYERDSSKGIFYGIIRSIVDFTIKNFDDVDLLSYLLACCSLTLFLYKKNLVKHLNGANSIMPIIPTLGDLEELNERLSHQSLTTSGKFSGGGGGGGIDFIDQLQQSTGITFGLIFKATTLKLSPLVDGAILNENYNKKLTSISASSFGSGSFGLGSNGVGSVLSIELITTYLSSIITIFQHRMVHFTLSQRFFNQVFCWIGALIMKGFMLRQTFCTETFATFVKTKIDFLTRWADDIGNVWVGDVANAFQQVREVINVLNIKDKEKIIDDKIRKQYCPTLNSNQLKQVLSLFSPGEFGGKRVSAKVIASICPPNKSSAGQSFVQDENKLNTIPIDSLHYLEIQDIKTLSLPLSIRQTIETEIINLKQQIACKK.

The region spanning 25-77 is the Myosin N-terminal SH3-like domain; it reads QEGAGVWIPDQELGWIGADVIEHSETSADQVLVRTEDDREVKIPLSKVFQKNP. The Myosin motor domain occupies 81–821; that stretch reads EGVDDLSFLS…QLASLEDMRL (741 aa). 174–181 contacts ATP; that stretch reads GESGAGKT. The interval 646-672 is disordered; that stretch reads FTQSPGGHPQGNGGPTSSNTKGTSGSS. The span at 660-672 shows a compositional bias: low complexity; the sequence is PTSSNTKGTSGSS. Residues 669 to 749 form an actin-binding region; that stretch reads SGSSSMKFLS…GFPTRRLLSE (81 aa). IQ domains follow at residues 824–851, 872–901, and 943–972; these read LDRSATVIQKRWKGYLYRKRYKQLRDAS, RTHSAILIQKVWRAHRDRVQYQKIRDASLQ, and KLRGIILIQARWRMKLAKRVYIQLRAEARS. Residues 973–1812 adopt a coiled-coil conformation; sequence LRTVQEQKNK…NYHMLEDRME (840 aa). A disordered region spans residues 1504–1524; sequence KKQLTQLQQQHEQSSTQLLLA. Positions 1506–1523 are enriched in low complexity; it reads QLTQLQQQHEQSSTQLLL. The Dilute domain maps to 1969–2188; the sequence is IDFIDQLQQS…IASICPPNKS (220 aa).

This sequence belongs to the TRAFAC class myosin-kinesin ATPase superfamily. Myosin family. As to quaternary structure, homodimer that associates with six light chains.

It localises to the contractile vacuole. In terms of biological role, processive motor protein that can move over long distances along F-actin without disassociating; processiveness depends on high physiological Mg(2+) concentrations. Presents a high actin affinity in the presence of ADP, fast ATP hydrolysis, and a high steady-state ATPase activity in the presence of actin that is rate limited by ADP release. Physiological decrease of free Mg(2+) ions leads to an increased rate of ADP release and shortening of the fraction of time it spends in the strong acting binding states. The protein is Myosin-J heavy chain (myoJ) of Dictyostelium discoideum (Social amoeba).